The following is a 292-amino-acid chain: 4-hydroxy-tetrahydrodipicolinate synthase (292 aa).

Residue Thr-45 participates in pyruvate binding. Tyr-133 (proton donor/acceptor) is an active-site residue. The Schiff-base intermediate with substrate role is filled by Lys-161. Ile-203 serves as a coordination point for pyruvate.

Belongs to the DapA family. Homodimer.

It localises to the cytoplasm. It catalyses the reaction L-aspartate 4-semialdehyde + pyruvate = (2S,4S)-4-hydroxy-2,3,4,5-tetrahydrodipicolinate + H2O + H(+). It participates in amino-acid biosynthesis; L-lysine biosynthesis via DAP pathway; (S)-tetrahydrodipicolinate from L-aspartate: step 3/4. Its function is as follows. Catalyzes the condensation of (S)-aspartate-beta-semialdehyde [(S)-ASA] and pyruvate to 4-hydroxy-tetrahydrodipicolinate (HTPA). The protein is 4-hydroxy-tetrahydrodipicolinate synthase of Pseudomonas syringae pv. syringae (strain B728a).